Here is a 207-residue protein sequence, read N- to C-terminus: Urease accessory protein UreG (207 aa).

Residue Gly-14–Thr-21 participates in GTP binding.

The protein belongs to the SIMIBI class G3E GTPase family. UreG subfamily. As to quaternary structure, homodimer. UreD, UreF and UreG form a complex that acts as a GTP-hydrolysis-dependent molecular chaperone, activating the urease apoprotein by helping to assemble the nickel containing metallocenter of UreC. The UreE protein probably delivers the nickel.

Its subcellular location is the cytoplasm. Functionally, facilitates the functional incorporation of the urease nickel metallocenter. This process requires GTP hydrolysis, probably effectuated by UreG. The protein is Urease accessory protein UreG of Rhodopseudomonas palustris (strain BisB18).